The chain runs to 83 residues: Large ribosomal subunit protein bL31B (83 aa).

The protein belongs to the bacterial ribosomal protein bL31 family. Type B subfamily. Part of the 50S ribosomal subunit.

The chain is Large ribosomal subunit protein bL31B from Tropheryma whipplei (strain TW08/27) (Whipple's bacillus).